A 206-amino-acid chain; its full sequence is Large ribosomal subunit protein uL4 (206 aa).

A disordered region spans residues 47–71; that stretch reads TRAQKGRSEVAGSTRKQWRQKGTGR.

The protein belongs to the universal ribosomal protein uL4 family. Part of the 50S ribosomal subunit.

Its function is as follows. One of the primary rRNA binding proteins, this protein initially binds near the 5'-end of the 23S rRNA. It is important during the early stages of 50S assembly. It makes multiple contacts with different domains of the 23S rRNA in the assembled 50S subunit and ribosome. Forms part of the polypeptide exit tunnel. This is Large ribosomal subunit protein uL4 from Nitrosomonas eutropha (strain DSM 101675 / C91 / Nm57).